A 276-amino-acid polypeptide reads, in one-letter code: MFVPFLIMLREGLEAALIVSLIASYLKRTQRGRWIGVMWIGVLLAAALCLGLGIFINETTGEFPQKEQELFEGIVAVIAVVILTWMVFWMRKVSRNVKVQLEQAVDSALQRGNHHGWALVMMVFFAVAREGLESVFFLLAAFQQDVGIWPPLGAMLGLATAVVLGFLLYWGGIRLNLGAFFKWTSLFILFVAAGLAAGAIRAFHEAGLWNHFQEIAFDMSAVLSTHSLFGTLMEGIFGYQEAPSVSEVAVWFIYLIPALVAFVLPPRAGATASRSV.

Met-1 is a topological domain (periplasmic). Residues 2 to 22 (FVPFLIMLREGLEAALIVSLI) form a helical membrane-spanning segment. Residues 23 to 34 (ASYLKRTQRGRW) are Cytoplasmic-facing. Residues 35 to 55 (IGVMWIGVLLAAALCLGLGIF) traverse the membrane as a helical segment. Over 56–69 (INETTGEFPQKEQE) the chain is Periplasmic. The chain crosses the membrane as a helical span at residues 70–90 (LFEGIVAVIAVVILTWMVFWM). The Cytoplasmic portion of the chain corresponds to 91–118 (RKVSRNVKVQLEQAVDSALQRGNHHGWA). The helical transmembrane segment at 119–139 (LVMMVFFAVAREGLESVFFLL) threads the bilayer. Topologically, residues 140–147 (AAFQQDVG) are periplasmic. The helical transmembrane segment at 148 to 168 (IWPPLGAMLGLATAVVLGFLL) threads the bilayer. Residues 169-179 (YWGGIRLNLGA) are Cytoplasmic-facing. A helical transmembrane segment spans residues 180 to 200 (FFKWTSLFILFVAAGLAAGAI). The Periplasmic segment spans residues 201-244 (RAFHEAGLWNHFQEIAFDMSAVLSTHSLFGTLMEGIFGYQEAPS). The chain crosses the membrane as a helical span at residues 245-265 (VSEVAVWFIYLIPALVAFVLP). At 266–276 (PRAGATASRSV) the chain is on the cytoplasmic side.

The protein belongs to the oxidase-dependent Fe transporter (OFeT) (TC 9.A.10.1) family. As to quaternary structure, part of a ferrous iron transporter composed of EfeU, EfeO and EfeB.

Its subcellular location is the cell inner membrane. Functionally, uptake of Fe(2+) ions across the membrane. The polypeptide is Ferrous iron permease EfeU (efeU) (Escherichia coli O6:K15:H31 (strain 536 / UPEC)).